A 163-amino-acid chain; its full sequence is Intron-encoded endonuclease I-PpoI (163 aa).

In terms of assembly, homodimer. Requires Zn(2+) as cofactor.

Mediates the homing of a group I intron in the ribosomal DNA. Makes a four-base staggered cut in its ribosomal DNA target sequence. This is Intron-encoded endonuclease I-PpoI from Physarum polycephalum (Slime mold).